A 283-amino-acid chain; its full sequence is 4-hydroxy-tetrahydrodipicolinate reductase (283 aa).

NAD(+) contacts are provided by residues 15–20 (GALGRM) and 116–118 (GTT). His-172 acts as the Proton donor/acceptor in catalysis. His-173 lines the (S)-2,3,4,5-tetrahydrodipicolinate pocket. The Proton donor role is filled by Lys-176. 182 to 183 (GT) provides a ligand contact to (S)-2,3,4,5-tetrahydrodipicolinate.

It belongs to the DapB family.

Its subcellular location is the cytoplasm. The enzyme catalyses (S)-2,3,4,5-tetrahydrodipicolinate + NAD(+) + H2O = (2S,4S)-4-hydroxy-2,3,4,5-tetrahydrodipicolinate + NADH + H(+). It carries out the reaction (S)-2,3,4,5-tetrahydrodipicolinate + NADP(+) + H2O = (2S,4S)-4-hydroxy-2,3,4,5-tetrahydrodipicolinate + NADPH + H(+). Its pathway is amino-acid biosynthesis; L-lysine biosynthesis via DAP pathway; (S)-tetrahydrodipicolinate from L-aspartate: step 4/4. Catalyzes the conversion of 4-hydroxy-tetrahydrodipicolinate (HTPA) to tetrahydrodipicolinate. The protein is 4-hydroxy-tetrahydrodipicolinate reductase of Prochlorococcus marinus (strain MIT 9313).